A 2769-amino-acid chain; its full sequence is MDVKERKPYRSLTRRRDAERRYTSSSADSEEGKAPQKSYSSSETLKAYDQDARLAYGSRVKDIVPQEAEEFCRTGANFTLRELGLEEVTPPHGTLYRTDIGLPHCGYSMGAGSDADMEADTVLSPEHPVRLWGRSTRSGRSSCLSSRANSNLTLTDTEHENTETDHPGGLQNHARLRTPPPPLSHAHTPNQHHAASINSLNRGNFTPRSNPSPAPTDHSLSGEPPAGGAQEPAHAQENWLLNSNIPLETRNLGKQPFLGTLQDNLIEMDILGASRHDGAYSDGHFLFKPGGTSPLFCTTSPGYPLTSSTVYSPPPRPLPRSTFARPAFNLKKPSKYCNWKCAALSAIVISATLVILLAYFVAMHLFGLNWHLQPMEGQMYEITEDTASSWPVPTDVSLYPSGGTGLETPDRKGKGTTEGKPSSFFPEDSFIDSGEIDVGRRASQKIPPGTFWRSQVFIDHPVHLKFNVSLGKAALVGIYGRKGLPPSHTQFDFVELLDGRRLLTQEARSLEGTPRQSRGTVPPSSHETGFIQYLDSGIWHLAFYNDGKESEVVSFLTTAIESVDNCPSNCYGNGDCISGTCHCFLGFLGPDCGRASCPVLCSGNGQYMKGRCLCHSGWKGAECDVPTNQCIDVACSNHGTCITGTCICNPGYKGESCEEVDCMDPTCSGRGVCVRGECHCSVGWGGTNCETPRATCLDQCSGHGTFLPDTGLCSCDPSWTGHDCSIEICAADCGGHGVCVGGTCRCEDGWMGAACDQRACHPRCAEHGTCRDGKCECSPGWNGEHCTIAHYLDRVVKEGCPGLCNGNGRCTLDLNGWHCVCQLGWRGAGCDTSMETACGDSKDNDGDGLVDCMDPDCCLQPLCHINPLCLGSPNPLDIIQETQVPVSQQNLHSFYDRIKFLVGRDSTHIIPGENPFDGGHACVIRGQVMTSDGTPLVGVNISFVNNPLFGYTISRQDGSFDLVTNGGISIILRFERAPFITQEHTLWLPWDRFFVMETIIMRHEENEIPSCDLSNFARPNPVVSPSPLTSFASSCAEKGPIVPEIQALQEEISISGCKMRLSYLSSRTPGYKSVLRISLTHPTIPFNLMKVHLMVAVEGRLFRKWFAAAPDLSYYFIWDKTDVYNQKVFGLSEAFVSVGYEYESCPDLILWEKRTTVLQGYEIDASKLGGWSLDKHHALNIQSGILHKGNGENQFVSQQPPVIGSIMGNGRRRSISCPSCNGLADGNKLLAPVALTCGSDGSLYVGDFNYIRRIFPSGNVTNILELRNKDFRHSHSPAHKYYLATDPMSGAVFLSDSNSRRVFKIKSTVVVKDLVKNSEVVAGTGDQCLPFDDTRCGDGGKATEATLTNPRGITVDKFGLIYFVDGTMIRRIDQNGIISTLLGSNDLTSARPLSCDSVMDISQVHLEWPTDLAINPMDNSLYVLDNNVVLQISENHQVRIVAGRPMHCQVPGIDHFLLSKVAIHATLESATALAVSHNGVLYIAETDEKKINRIRQVTTSGEISLVAGAPSGCDCKNDANCDCFSGDDGYAKDAKLNTPSSLAVCADGELYVADLGNIRIRFIRKNKPFLNTQNMYELSSPIDQELYLFDTTGKHLYTQSLPTGDYLYNFTYTGDGDITLITDNNGNMVNVRRDSTGMPLWLVVPDGQVYWVTMGTNSALKSVTTQGHELAMMTYHGNSGLLATKSNENGWTTFYEYDSFGRLTNVTFPTGQVSSFRSDTDSSVHVQVETSSKDDVTITTNLSASGAFYTLLQDQVRNSYYIGADGSLRLLLANGMEVALQTEPHLLAGTVNPTVGKRNVTLPIDNGLNLVEWRQRKEQARGQVTVFGRRLRVHNRNLLSLDFDRVTRTEKIYDDHRKFTLRILYDQAGRPSLWSPSSRLNGVNVTYSPGGYIAGIQRGIMSERMEYDQAGRITSRIFADGKTWSYTYLEKSMVLLLHSQRQYIFEFDKNDRLSSVTMPNVARQTLETIRSVGYYRNIYQPPEGNASVIQDFTEDGHLLHTFYLGTGRRVIYKYGKLSKLAETLYDTTKVSFTYDETAGMLKTINLQNEGFTCTIRYRQIGPLIDRQIFRFTEEGMVNARFDYNYDNSFRVTSMQAVINETPLPIDLYRYDDVSGKTEQFGKFGVIYYDINQIITTAVMTHTKHFDAYGRMKEVQYEIFRSLMYWMTVQYDNMGRVVKKELKVGPYANTTRYSYEYDADGQLQTVSINDKPLWRYSYDLNGNLHLLSPGNSARLTPLRYDIRDRITRLGDVQYKMDEDGFLRQRGGDIFEYNSAGLLIKAYNRAGSWSVRYRYDGLGRRVSSKSSHSHHLQFFYADLTNPTKVTHLYNHSSSEITSLYYDLQGHLFAMELSSGDEFYIACDNIGTPLAVFSGTGLMIKQILYTAYGEIYMDTNPNFQIIIGYHGGLYDPLTKLVHMGRRDYDVLAGRWTSPDHELWKHLSSSNVMPFNLYMFKNNNPISNSQDIKCFMTDVNSWLLTFGFQLHNVIPGYPKPDMDAMEPSYELIHTQMKTQEWDNSKSILGVQCEVQKQLKAFVTLERFDQLYGSTITSCQQAPKTKKFASSGSVFGKGVKFALKDGRVTTDIISVANEDGRRVAAILNHAHYLENLHFTIDGVDTHYFVKPGPSEGDLAILGLSGGRRTLENGVNVTVSQINTVLNGRTRRYTDIQLQYGALCLNTRYGTTLDEEKARVLELARQRAVRQAWAREQQRLREGEEGLRAWTEGEKQQVLSTGRVQGYDGFFVISVEQYPELSDSANNIHFMRQSEMGRR.

Basic and acidic residues predominate over residues Met1–Tyr22. Positions Met1 to Leu45 are disordered. The region spanning Met1–Cys341 is the Teneurin N-terminal domain. At Met1–Ser345 the chain is on the cytoplasmic side. Position 124 is a phosphoserine (Ser124). Residues Arg130–Ala233 are disordered. Over residues Arg134 to Thr155 the composition is skewed to low complexity. A compositionally biased stretch (basic and acidic residues) spans Asp156–His166. Thr178 carries the phosphothreonine modification. The segment covering His187 to Pro211 has biased composition (polar residues). Residues Ala346–Phe366 form a helical membrane-spanning segment. Residues Gly367–Arg2769 lie on the Extracellular side of the membrane. The segment at Pro400–Pro426 is disordered. Residues Thr408–Thr417 are compositionally biased toward basic and acidic residues. Asn467 carries an N-linked (GlcNAc...) asparagine glycan. The interval Ala507 to His526 is disordered. Residues Pro514–His526 are compositionally biased toward polar residues. EGF-like domains are found at residues Ser562 to Gly593, Arg594 to Asp624, Pro626 to Glu658, Glu659 to Glu690, Pro692 to Ser725, Ile726 to Gln757, Arg758 to Thr787, and Ile788 to Asp831. Intrachain disulfides connect Cys566/Cys576, Cys570/Cys581, Cys583/Cys592, Cys601/Cys612, Cys614/Cys623, Cys630/Cys641, Cys635/Cys646, Cys648/Cys657, Cys662/Cys673, Cys667/Cys678, Cys680/Cys689, Cys700/Cys713, Cys715/Cys724, Cys729/Cys739, Cys733/Cys744, Cys746/Cys755, Cys760/Cys770, Cys764/Cys775, Cys777/Cys786, Cys800/Cys810, Cys804/Cys819, and Cys821/Cys830. N-linked (GlcNAc...) asparagine glycans are attached at residues Asn940 and Asn1259. 5 NHL repeats span residues Ser1216 to Asn1259, Leu1264 to Thr1308, Thr1334 to Ile1378, Leu1393 to Arg1444, and Cys1523 to Asn1566. The stretch at Tyr1576–His1595 is one YD 1 repeat. Residue Asn1609 is glycosylated (N-linked (GlcNAc...) asparagine). YD repeat units follow at residues Tyr1612–Arg1632, Tyr1675–Phe1694, and Tyr1695–Arg1717. Asn1705, Asn1741, Asn1799, and Asn1884 each carry an N-linked (GlcNAc...) asparagine glycan. YD repeat units lie at residues Tyr1887–Glu1906, Tyr1928–Glu1946, Phe1947–Glu1967, Tyr1974–Asp1991, Phe1992–Lys2013, Tyr2014–Ser2031, Tyr2034–Thr2054, Tyr2057–Val2077, Tyr2085–Pro2104, Tyr2110–Tyr2127, Tyr2128–Val2154, Tyr2156–Gln2169, Tyr2170–Ser2193, Tyr2196–Ser2216, Tyr2217–Leu2237, Tyr2239–Gly2259, Tyr2271–Tyr2291, and Tyr2293–Phe2313. N-linked (GlcNAc...) asparagine glycosylation is present at Asn1985. N-linked (GlcNAc...) asparagine glycosylation is present at Asn2188. Asn2328 carries an N-linked (GlcNAc...) asparagine glycan. The YD 23 repeat unit spans residues Tyr2339–Ile2380. The N-linked (GlcNAc...) asparagine glycan is linked to Asn2646.

It belongs to the tenascin family. Teneurin subfamily. Homodimer; disulfide-linked. May also form heterodimer with either TENM1 or TENM2 or TENM3.

It is found in the cell membrane. The protein localises to the cell projection. It localises to the nucleus. The protein resides in the cytoplasm. Its function is as follows. Involved in neural development, regulating the establishment of proper connectivity within the nervous system. Plays a role in the establishment of the anterior-posterior axis during gastrulation. Regulates the differentiation and cellular process formation of oligodendrocytes and myelination of small-diameter axons in the central nervous system (CNS). Promotes activation of focal adhesion kinase. May function as a cellular signal transducer. The protein is Teneurin-4 (TENM4) of Homo sapiens (Human).